The primary structure comprises 195 residues: Flavin prenyltransferase UbiX (195 aa).

FMN-binding positions include 17–19, Ser43, 94–97, and Arg129; these read GGS and SAGT. Dimethylallyl phosphate-binding residues include Tyr159 and Arg175.

This sequence belongs to the UbiX/PAD1 family.

The catalysed reaction is dimethylallyl phosphate + FMNH2 = prenylated FMNH2 + phosphate. Its function is as follows. Flavin prenyltransferase that catalyzes the synthesis of the prenylated FMN cofactor (prenyl-FMN) for 4-hydroxy-3-polyprenylbenzoic acid decarboxylase UbiD. The prenyltransferase is metal-independent and links a dimethylallyl moiety from dimethylallyl monophosphate (DMAP) to the flavin N5 and C6 atoms of FMN. This is Flavin prenyltransferase UbiX from Deinococcus radiodurans (strain ATCC 13939 / DSM 20539 / JCM 16871 / CCUG 27074 / LMG 4051 / NBRC 15346 / NCIMB 9279 / VKM B-1422 / R1).